Here is a 228-residue protein sequence, read N- to C-terminus: 2-hydroxy-3-keto-5-methylthiopentenyl-1-phosphate phosphatase (228 aa).

This sequence belongs to the HAD-like hydrolase superfamily. MtnX family.

The enzyme catalyses 2-hydroxy-5-methylsulfanyl-3-oxopent-1-enyl phosphate + H2O = 1,2-dihydroxy-5-(methylsulfanyl)pent-1-en-3-one + phosphate. It participates in amino-acid biosynthesis; L-methionine biosynthesis via salvage pathway; L-methionine from S-methyl-5-thio-alpha-D-ribose 1-phosphate: step 4/6. In terms of biological role, dephosphorylates 2-hydroxy-3-keto-5-methylthiopentenyl-1-phosphate (HK-MTPenyl-1-P) yielding 1,2-dihydroxy-3-keto-5-methylthiopentene (DHK-MTPene). In Lysinibacillus sphaericus (strain C3-41), this protein is 2-hydroxy-3-keto-5-methylthiopentenyl-1-phosphate phosphatase.